The primary structure comprises 216 residues: Probable phosphatase SPAC513.02 (216 aa).

The Tele-phosphohistidine intermediate role is filled by His15.

The protein belongs to the phosphoglycerate mutase family. BPG-dependent PGAM subfamily.

Its subcellular location is the cytoplasm. It localises to the nucleus. This Schizosaccharomyces pombe (strain 972 / ATCC 24843) (Fission yeast) protein is Probable phosphatase SPAC513.02.